We begin with the raw amino-acid sequence, 1438 residues long: DNA polymerase III PolC-type (1438 aa).

Positions 422 to 578 (YVVFDVETTG…YDTEATAYIF (157 aa)) constitute an Exonuclease domain.

Belongs to the DNA polymerase type-C family. PolC subfamily.

Its subcellular location is the cytoplasm. The catalysed reaction is DNA(n) + a 2'-deoxyribonucleoside 5'-triphosphate = DNA(n+1) + diphosphate. Required for replicative DNA synthesis. This DNA polymerase also exhibits 3' to 5' exonuclease activity. The protein is DNA polymerase III PolC-type of Staphylococcus aureus (strain MRSA252).